The following is a 172-amino-acid chain: Shikimate kinase (172 aa).

An ATP-binding site is contributed by glycine 11–threonine 16. Serine 15 is a Mg(2+) binding site. Substrate-binding residues include aspartate 33, arginine 57, and glycine 79. Arginine 117 serves as a coordination point for ATP. Arginine 136 lines the substrate pocket. Arginine 153 lines the ATP pocket.

This sequence belongs to the shikimate kinase family. Monomer. It depends on Mg(2+) as a cofactor.

The protein resides in the cytoplasm. It carries out the reaction shikimate + ATP = 3-phosphoshikimate + ADP + H(+). Its pathway is metabolic intermediate biosynthesis; chorismate biosynthesis; chorismate from D-erythrose 4-phosphate and phosphoenolpyruvate: step 5/7. Catalyzes the specific phosphorylation of the 3-hydroxyl group of shikimic acid using ATP as a cosubstrate. This chain is Shikimate kinase, found in Pseudomonas paraeruginosa (strain DSM 24068 / PA7) (Pseudomonas aeruginosa (strain PA7)).